A 62-amino-acid chain; its full sequence is Flavodoxin (62 aa).

The Flavodoxin-like domain occupies Ile4–Leu62.

Belongs to the flavodoxin family. FMN is required as a cofactor.

Functionally, low-potential electron donor to a number of redox enzymes. NifF is the electron donor to nitrogenase. The protein is Flavodoxin (nifF) of Klebsiella oxytoca.